Consider the following 553-residue polypeptide: Hydroxylamine reductase (553 aa).

Residues Cys3, Cys6, Cys18, and Cys25 each contribute to the [2Fe-2S] cluster site. Hybrid [4Fe-2O-2S] cluster is bound by residues His252, Glu276, Cys320, Cys408, Cys436, Cys461, Glu495, and Lys497. At Cys408 the chain carries Cysteine persulfide.

Belongs to the HCP family. The cofactor is [2Fe-2S] cluster. It depends on hybrid [4Fe-2O-2S] cluster as a cofactor.

Its subcellular location is the cytoplasm. It catalyses the reaction A + NH4(+) + H2O = hydroxylamine + AH2 + H(+). In terms of biological role, catalyzes the reduction of hydroxylamine to form NH(3) and H(2)O. The chain is Hydroxylamine reductase from Vibrio vulnificus (strain YJ016).